Here is a 584-residue protein sequence, read N- to C-terminus: Proline--tRNA ligase (584 aa).

The tract at residues 242 to 261 (APPASNPEERPATQVHDTPD) is disordered.

The protein belongs to the class-II aminoacyl-tRNA synthetase family. ProS type 1 subfamily. Homodimer.

It localises to the cytoplasm. The catalysed reaction is tRNA(Pro) + L-proline + ATP = L-prolyl-tRNA(Pro) + AMP + diphosphate. Functionally, catalyzes the attachment of proline to tRNA(Pro) in a two-step reaction: proline is first activated by ATP to form Pro-AMP and then transferred to the acceptor end of tRNA(Pro). As ProRS can inadvertently accommodate and process non-cognate amino acids such as alanine and cysteine, to avoid such errors it has two additional distinct editing activities against alanine. One activity is designated as 'pretransfer' editing and involves the tRNA(Pro)-independent hydrolysis of activated Ala-AMP. The other activity is designated 'posttransfer' editing and involves deacylation of mischarged Ala-tRNA(Pro). The misacylated Cys-tRNA(Pro) is not edited by ProRS. The polypeptide is Proline--tRNA ligase (Salinispora arenicola (strain CNS-205)).